A 183-amino-acid polypeptide reads, in one-letter code: Hypoxanthine/guanine phosphoribosyltransferase (183 aa).

It belongs to the purine/pyrimidine phosphoribosyltransferase family. Archaeal HPRT subfamily. As to quaternary structure, homodimer.

Its subcellular location is the cytoplasm. The enzyme catalyses IMP + diphosphate = hypoxanthine + 5-phospho-alpha-D-ribose 1-diphosphate. It catalyses the reaction GMP + diphosphate = guanine + 5-phospho-alpha-D-ribose 1-diphosphate. The protein operates within purine metabolism; IMP biosynthesis via salvage pathway; IMP from hypoxanthine: step 1/1. Functionally, catalyzes a salvage reaction resulting in the formation of IMP that is energically less costly than de novo synthesis. This Methanocaldococcus jannaschii (strain ATCC 43067 / DSM 2661 / JAL-1 / JCM 10045 / NBRC 100440) (Methanococcus jannaschii) protein is Hypoxanthine/guanine phosphoribosyltransferase.